We begin with the raw amino-acid sequence, 407 residues long: Dephospho-CoA kinase (407 aa).

The 199-residue stretch at Arg-3–Leu-201 folds into the DPCK domain. An ATP-binding site is contributed by Gly-11–Ala-16. The interval Pro-196–Pro-407 is UPF0157.

In the N-terminal section; belongs to the CoaE family. The protein in the C-terminal section; belongs to the UPF0157 (GrpB) family.

The protein resides in the cytoplasm. It catalyses the reaction 3'-dephospho-CoA + ATP = ADP + CoA + H(+). It participates in cofactor biosynthesis; coenzyme A biosynthesis; CoA from (R)-pantothenate: step 5/5. Its function is as follows. Catalyzes the phosphorylation of the 3'-hydroxyl group of dephosphocoenzyme A to form coenzyme A. The sequence is that of Dephospho-CoA kinase from Mycolicibacterium paratuberculosis (strain ATCC BAA-968 / K-10) (Mycobacterium paratuberculosis).